The following is a 773-amino-acid chain: Ethylene receptor 2 (773 aa).

4 helical membrane-spanning segments follow: residues 4–24 (EIASWLLILSMVVFVSPVLAI), 53–73 (VSDFLIAVAYFSIPIELLYFV), 82–102 (WVLFEFIAFIVLCGMTHLLHG), and 122–142 (LTALVSCATAITLITLIPLLL). The Cu cation site is built by Cys-94 and His-98. The region spanning 187–331 (DRHTILYTTL…VVADQVTVAL (145 aa)) is the GAF domain. The Histidine kinase domain maps to 374–614 (TMSEGMRRPM…PETMSLLLRF (241 aa)). A Response regulatory domain is found at 647-766 (QVLLVDTNDS…AMESELRRVL (120 aa)). Residue Asp-702 is modified to 4-aspartylphosphate. Lys-751 is covalently cross-linked (Glycyl lysine isopeptide (Lys-Gly) (interchain with G-Cter in ubiquitin)).

This sequence belongs to the ethylene receptor family. As to quaternary structure, heteromer with ETR1. Binds to MRF3/ECIP1. It depends on Cu cation as a cofactor. Autophosphorylated predominantly on Ser residues. As to expression, expressed in seedlings, roots, leaves, flowers, mature siliques, shoot apical meristems, leaf primordia, inflorescence meristems, young floral meristems, developing petals, carpels and ovules. Low expression in stamens.

It localises to the endoplasmic reticulum membrane. Its function is as follows. Ethylene receptor related to bacterial two-component regulators. Acts as a redundant negative regulator of ethylene signaling. The sequence is that of Ethylene receptor 2 from Arabidopsis thaliana (Mouse-ear cress).